Consider the following 336-residue polypeptide: Holliday junction branch migration complex subunit RuvB (336 aa).

The tract at residues 4 to 184 (ADRLISAGAT…FGIVQRLEFY (181 aa)) is large ATPase domain (RuvB-L). ATP contacts are provided by residues Ile-23, Arg-24, Gly-65, Lys-68, Thr-69, Thr-70, 131-133 (EDY), Arg-174, Tyr-184, and Arg-221. Residue Thr-69 coordinates Mg(2+). A small ATPAse domain (RuvB-S) region spans residues 185–255 (QVPDLQHIVG…IAAQALDMLN (71 aa)). Residues 258-336 (AEGFDYMDRK…HFGITPPEMP (79 aa)) form a head domain (RuvB-H) region. Residues Arg-294, Arg-313, and Arg-318 each contribute to the DNA site.

Belongs to the RuvB family. In terms of assembly, homohexamer. Forms an RuvA(8)-RuvB(12)-Holliday junction (HJ) complex. HJ DNA is sandwiched between 2 RuvA tetramers; dsDNA enters through RuvA and exits via RuvB. An RuvB hexamer assembles on each DNA strand where it exits the tetramer. Each RuvB hexamer is contacted by two RuvA subunits (via domain III) on 2 adjacent RuvB subunits; this complex drives branch migration. In the full resolvosome a probable DNA-RuvA(4)-RuvB(12)-RuvC(2) complex forms which resolves the HJ.

The protein localises to the cytoplasm. It catalyses the reaction ATP + H2O = ADP + phosphate + H(+). The RuvA-RuvB-RuvC complex processes Holliday junction (HJ) DNA during genetic recombination and DNA repair, while the RuvA-RuvB complex plays an important role in the rescue of blocked DNA replication forks via replication fork reversal (RFR). RuvA specifically binds to HJ cruciform DNA, conferring on it an open structure. The RuvB hexamer acts as an ATP-dependent pump, pulling dsDNA into and through the RuvAB complex. RuvB forms 2 homohexamers on either side of HJ DNA bound by 1 or 2 RuvA tetramers; 4 subunits per hexamer contact DNA at a time. Coordinated motions by a converter formed by DNA-disengaged RuvB subunits stimulates ATP hydrolysis and nucleotide exchange. Immobilization of the converter enables RuvB to convert the ATP-contained energy into a lever motion, pulling 2 nucleotides of DNA out of the RuvA tetramer per ATP hydrolyzed, thus driving DNA branch migration. The RuvB motors rotate together with the DNA substrate, which together with the progressing nucleotide cycle form the mechanistic basis for DNA recombination by continuous HJ branch migration. Branch migration allows RuvC to scan DNA until it finds its consensus sequence, where it cleaves and resolves cruciform DNA. In Salmonella agona (strain SL483), this protein is Holliday junction branch migration complex subunit RuvB.